The primary structure comprises 178 residues: Large ribosomal subunit protein uL6 (178 aa).

The protein belongs to the universal ribosomal protein uL6 family. Part of the 50S ribosomal subunit.

Its function is as follows. This protein binds to the 23S rRNA, and is important in its secondary structure. It is located near the subunit interface in the base of the L7/L12 stalk, and near the tRNA binding site of the peptidyltransferase center. The polypeptide is Large ribosomal subunit protein uL6 (Methanobrevibacter smithii (strain ATCC 35061 / DSM 861 / OCM 144 / PS)).